The following is a 1854-amino-acid chain: Protein virilizer (1854 aa).

Ser-186 carries the post-translational modification Phosphoserine. Composition is skewed to basic and acidic residues over residues 202–214 (YHQH…QREM) and 236–259 (THSE…DWSR). Disordered stretches follow at residues 202 to 361 (YHQH…EIIG), 777 to 821 (NPEE…GKPV), 1570 to 1589 (TSTE…ASSC), 1720 to 1788 (VRGR…NRGS), and 1804 to 1854 (IGSP…SYLR). Phosphoserine occurs at positions 258, 260, and 276. Residues 275 to 285 (RSRSVVDEHKW) show a composition bias toward basic and acidic residues. Position 288 is a phosphothreonine (Thr-288). The residue at position 295 (Ser-295) is a Phosphoserine. Residue Thr-297 is modified to Phosphothreonine. Ser-301 and Ser-312 each carry phosphoserine. Basic and acidic residues-rich tracts occupy residues 325-343 (HSSE…EDRS) and 777-796 (NPEE…KAME). Residues 779–808 (EEKEEKAEKSDAEDKAMEVENEAVEAGGEK) adopt a coiled-coil conformation. Composition is skewed to low complexity over residues 1738–1748 (SRPPNTSRPPS) and 1816–1838 (SYRS…PHYS).

Belongs to the vir family. As to quaternary structure, component of the WMM complex, a N6-methyltransferase complex composed of a catalytic subcomplex, named MAC, and of an associated subcomplex, named MACOM. The MAC subcomplex is composed of Ime4/Mettl3 and Mettl14. The MACOM subcomplex is composed of fl(2)d, Flacc/Xio, Hakai, vir, and, in some cases of nito. Part of a complex containing fl(2)d, Sxl and vir.

It localises to the nucleus. In terms of biological role, associated component of the WMM complex, a complex that mediates N6-methyladenosine (m6A) methylation of mRNAs, a modification that plays a role in the efficiency of mRNA splicing and is required for sex determination. Required for sex determination and dosage compensation via Sxl alternative splicing: m6A methylation acts as a key regulator of Sxl pre-mRNA and promotes female-specific alternative splicing of Sxl, which determines female physiognomy. M6A methylation is also required for neuronal functions. Required for proper inclusion of regulated exons in Ubx transcripts, leading to isoforms Ia/b and IIa/b. This is Protein virilizer from Drosophila melanogaster (Fruit fly).